The chain runs to 171 residues: Regulatory protein RecX (171 aa).

It belongs to the RecX family.

It is found in the cytoplasm. Modulates RecA activity. This Mycobacterium leprae (strain Br4923) protein is Regulatory protein RecX.